Reading from the N-terminus, the 446-residue chain is Aspartokinase (446 aa).

Residues 250–294 enclose the RPE1 insert domain; that stretch reads IPLVKSTYMEESALNTKHSTKIDIPEDASGSTYKLPIELALQNRY.

The protein belongs to the aspartokinase family.

The enzyme catalyses L-aspartate + ATP = 4-phospho-L-aspartate + ADP. It functions in the pathway amino-acid biosynthesis; L-lysine biosynthesis via DAP pathway; (S)-tetrahydrodipicolinate from L-aspartate: step 1/4. It participates in amino-acid biosynthesis; L-methionine biosynthesis via de novo pathway; L-homoserine from L-aspartate: step 1/3. The protein operates within amino-acid biosynthesis; L-threonine biosynthesis; L-threonine from L-aspartate: step 1/5. The polypeptide is Aspartokinase (lysC) (Rickettsia prowazekii (strain Madrid E)).